Reading from the N-terminus, the 137-residue chain is Large ribosomal subunit protein uL16 (137 aa).

Belongs to the universal ribosomal protein uL16 family. Part of the 50S ribosomal subunit.

In terms of biological role, binds 23S rRNA and is also seen to make contacts with the A and possibly P site tRNAs. The protein is Large ribosomal subunit protein uL16 of Acinetobacter baumannii (strain SDF).